Here is a 423-residue protein sequence, read N- to C-terminus: Serine--tRNA ligase (423 aa).

231-233 provides a ligand contact to L-serine; the sequence is TAE. Residue 262–264 coordinates ATP; sequence RSE. Glu-285 lines the L-serine pocket. 349–352 provides a ligand contact to ATP; the sequence is EISS. Residue Ser-384 coordinates L-serine.

This sequence belongs to the class-II aminoacyl-tRNA synthetase family. Type-1 seryl-tRNA synthetase subfamily. Homodimer. The tRNA molecule binds across the dimer.

Its subcellular location is the cytoplasm. It catalyses the reaction tRNA(Ser) + L-serine + ATP = L-seryl-tRNA(Ser) + AMP + diphosphate + H(+). The enzyme catalyses tRNA(Sec) + L-serine + ATP = L-seryl-tRNA(Sec) + AMP + diphosphate + H(+). Its pathway is aminoacyl-tRNA biosynthesis; selenocysteinyl-tRNA(Sec) biosynthesis; L-seryl-tRNA(Sec) from L-serine and tRNA(Sec): step 1/1. Functionally, catalyzes the attachment of serine to tRNA(Ser). Is also able to aminoacylate tRNA(Sec) with serine, to form the misacylated tRNA L-seryl-tRNA(Sec), which will be further converted into selenocysteinyl-tRNA(Sec). This Lactococcus lactis subsp. cremoris (strain SK11) protein is Serine--tRNA ligase.